The sequence spans 512 residues: 2,3-bisphosphoglycerate-independent phosphoglycerate mutase (512 aa).

Mn(2+)-binding residues include D12 and S62. S62 (phosphoserine intermediate) is an active-site residue. Substrate is bound by residues H123, 153-154 (RD), R185, R191, 260-263 (RPDR), and K333. Mn(2+) contacts are provided by D400, H404, D441, H442, and H460.

Belongs to the BPG-independent phosphoglycerate mutase family. Monomer. Requires Mn(2+) as cofactor.

The enzyme catalyses (2R)-2-phosphoglycerate = (2R)-3-phosphoglycerate. It participates in carbohydrate degradation; glycolysis; pyruvate from D-glyceraldehyde 3-phosphate: step 3/5. Functionally, catalyzes the interconversion of 2-phosphoglycerate and 3-phosphoglycerate. In Clostridium perfringens (strain ATCC 13124 / DSM 756 / JCM 1290 / NCIMB 6125 / NCTC 8237 / Type A), this protein is 2,3-bisphosphoglycerate-independent phosphoglycerate mutase.